Here is a 202-residue protein sequence, read N- to C-terminus: UPF0301 protein Meso_0753 (202 aa).

This sequence belongs to the UPF0301 (AlgH) family.

The chain is UPF0301 protein Meso_0753 from Chelativorans sp. (strain BNC1).